Here is a 791-residue protein sequence, read N- to C-terminus: Lon protease (791 aa).

The 207-residue stretch at 3 to 209 (KPILISRAIV…TILHLLFDQL (207 aa)) folds into the Lon N-terminal domain. 365 to 372 (GPPGVGKT) lines the ATP pocket. The region spanning 605-790 (TTIPGIVNGM…DEVYNIVFGE (186 aa)) is the Lon proteolytic domain. Active-site residues include Ser696 and Lys739.

Belongs to the peptidase S16 family. In terms of assembly, homohexamer. Organized in a ring with a central cavity.

Its subcellular location is the cytoplasm. It catalyses the reaction Hydrolysis of proteins in presence of ATP.. Its function is as follows. ATP-dependent serine protease that mediates the selective degradation of mutant and abnormal proteins as well as certain short-lived regulatory proteins. Required for cellular homeostasis and for survival from DNA damage and developmental changes induced by stress. Degrades polypeptides processively to yield small peptide fragments that are 5 to 10 amino acids long. Binds to DNA in a double-stranded, site-specific manner. This chain is Lon protease, found in Ureaplasma parvum serovar 3 (strain ATCC 27815 / 27 / NCTC 11736).